Reading from the N-terminus, the 691-residue chain is Elongation factor G (691 aa).

One can recognise a tr-type G domain in the interval 8–283 (KKVRNIGIAA…AVVAYLPAPD (276 aa)). GTP-binding positions include 17-24 (AHIDAGKT), 81-85 (DTPGH), and 135-138 (NKMD).

The protein belongs to the TRAFAC class translation factor GTPase superfamily. Classic translation factor GTPase family. EF-G/EF-2 subfamily.

The protein resides in the cytoplasm. In terms of biological role, catalyzes the GTP-dependent ribosomal translocation step during translation elongation. During this step, the ribosome changes from the pre-translocational (PRE) to the post-translocational (POST) state as the newly formed A-site-bound peptidyl-tRNA and P-site-bound deacylated tRNA move to the P and E sites, respectively. Catalyzes the coordinated movement of the two tRNA molecules, the mRNA and conformational changes in the ribosome. This is Elongation factor G from Campylobacter jejuni subsp. jejuni serotype O:23/36 (strain 81-176).